An 840-amino-acid polypeptide reads, in one-letter code: DNA mismatch repair protein MutS (840 aa).

Residue 601–608 (GPNMSGKS) participates in ATP binding.

It belongs to the DNA mismatch repair MutS family.

This protein is involved in the repair of mismatches in DNA. It is possible that it carries out the mismatch recognition step. This protein has a weak ATPase activity. This Lactococcus lactis subsp. cremoris (strain SK11) protein is DNA mismatch repair protein MutS.